The chain runs to 271 residues: MGYISNNNLINYLPLSTTQPPLLLTHCDINGNDHHQLITASSGEHDIDERKNNIPAAATLRWNPTPEQITTLEELYRSGTRTPTTEQIQQIASKLRKYGRIEGKNVFYWFQNHKARERLKRRRREGGAIIKPHKDVKDSSSGGHRVDQTKLCPSFPHTNRPQPQHELDPASYNKDNNANNEDHGTTEESDQRASEVGKYATWRNLVTWSITQQPEEINIDENVNGEEEETRDNRTLNLFPVREYQEKTGRLIEKTKACNYCYYYEFMPLKN.

A DNA-binding region (homeobox; WUS-type) is located at residues 57–121; sequence AATLRWNPTP…NHKARERLKR (65 aa). The segment at 118–195 is disordered; the sequence is RLKRRRREGG…TEESDQRASE (78 aa). Composition is skewed to basic and acidic residues over residues 132–148 and 180–195; these read PHKD…RVDQ and NEDH…RASE.

Belongs to the WUS homeobox family. In terms of tissue distribution, highly expressed in developing ovules. Present in developing primordia and differentiating organs but absent in mature organs.

Its subcellular location is the nucleus. Its function is as follows. Transcription factor that plays a central role in ovule patterning by regulating cell proliferation of the maternal integuments and differentiation of the maegaspore mother cell (MCC). Involved in AGAMOUS (AG) repression in leaves. In Arabidopsis thaliana (Mouse-ear cress), this protein is WUSCHEL-related homeobox 6 (WOX6).